Reading from the N-terminus, the 196-residue chain is Shikimate kinase (196 aa).

21–26 (GTGKSR) contributes to the ATP binding site. Ser25 serves as a coordination point for Mg(2+). Residues Asp43, Arg67, and Gly89 each contribute to the substrate site. An ATP-binding site is contributed by Arg126. Substrate is bound at residue Arg145. Arg161 contacts ATP.

It belongs to the shikimate kinase family. Monomer. The cofactor is Mg(2+).

Its subcellular location is the cytoplasm. It carries out the reaction shikimate + ATP = 3-phosphoshikimate + ADP + H(+). It participates in metabolic intermediate biosynthesis; chorismate biosynthesis; chorismate from D-erythrose 4-phosphate and phosphoenolpyruvate: step 5/7. Catalyzes the specific phosphorylation of the 3-hydroxyl group of shikimic acid using ATP as a cosubstrate. The protein is Shikimate kinase of Deinococcus radiodurans (strain ATCC 13939 / DSM 20539 / JCM 16871 / CCUG 27074 / LMG 4051 / NBRC 15346 / NCIMB 9279 / VKM B-1422 / R1).